The chain runs to 510 residues: GMP synthase [glutamine-hydrolyzing] (510 aa).

A Glutamine amidotransferase type-1 domain is found at 5 to 195 (LVLVIDFGGQ…LFKICGLKED (191 aa)). Cysteine 82 (nucleophile) is an active-site residue. Catalysis depends on residues histidine 169 and glutamate 171. The GMPS ATP-PPase domain occupies 196-385 (WSMSSFAKEK…LGIPHKLVWR (190 aa)). 223–229 (SGGVDSS) contributes to the ATP binding site.

In terms of assembly, homodimer.

It carries out the reaction XMP + L-glutamine + ATP + H2O = GMP + L-glutamate + AMP + diphosphate + 2 H(+). Its pathway is purine metabolism; GMP biosynthesis; GMP from XMP (L-Gln route): step 1/1. Catalyzes the synthesis of GMP from XMP. This chain is GMP synthase [glutamine-hydrolyzing], found in Clostridium acetobutylicum (strain ATCC 824 / DSM 792 / JCM 1419 / IAM 19013 / LMG 5710 / NBRC 13948 / NRRL B-527 / VKM B-1787 / 2291 / W).